The following is a 318-amino-acid chain: MKIKQAIDKIPGGLMLVPLFLGAFCNTFTPGAGKFLGSFSNGLITGTIPILAVWFFCMGASIELKATGSMLKKSGVLVVTKLATAWVVAMIAGAFLPGDGIQNGLLAGISVLALVAAMDMTNGGLYAALMNQYGSKEEAGAFVLMSLESGPLMTMVILGASGIATFEPQLFVGAVLPFLIGFTLGNLDPDLRKLFGNSVQTLIPFFAFALGNTINLSVILQTGFAGIFLGVLVIIVTGIPLILADKFIGGGNGTAGIAASSSAGAAVATPLLIANMAPEFAPVAQQATALVATSVIVTSVLVPIITALWAKRFSPKHA.

10 helical membrane-spanning segments follow: residues 10 to 30, 42 to 62, 76 to 96, 105 to 125, 139 to 159, 162 to 182, 199 to 219, 224 to 244, 254 to 274, and 289 to 309; these read IPGGLMLVPLFLGAFCNTFTP, GLITGTIPILAVWFFCMGASI, VLVVTKLATAWVVAMIAGAFL, LLAGISVLALVAAMDMTNGGL, AGAFVLMSLESGPLMTMVILG, GIATFEPQLFVGAVLPFLIGF, VQTLIPFFAFALGNTINLSVI, FAGIFLGVLVIIVTGIPLILA, TAGIAASSSAGAAVATPLLIA, and ALVATSVIVTSVLVPIITALW.

Belongs to the KdgT transporter family.

The protein resides in the cell inner membrane. The enzyme catalyses 2-dehydro-3-deoxy-D-gluconate(in) + H(+)(in) = 2-dehydro-3-deoxy-D-gluconate(out) + H(+)(out). Functionally, catalyzes the proton-dependent uptake of 2-keto-3-deoxygluconate (KDG) into the cell. The protein is 2-keto-3-deoxygluconate permease of Pectobacterium atrosepticum (strain SCRI 1043 / ATCC BAA-672) (Erwinia carotovora subsp. atroseptica).